The chain runs to 130 residues: Small ribosomal subunit protein uS9 (130 aa).

The protein belongs to the universal ribosomal protein uS9 family.

This chain is Small ribosomal subunit protein uS9, found in Bacillus thuringiensis subsp. konkukian (strain 97-27).